The chain runs to 122 residues: Small ribosomal subunit protein uS13 (122 aa).

Residues 98–122 (VRGQRTHTNARTRKGPAKAIAGKKK) form a disordered region.

It belongs to the universal ribosomal protein uS13 family. In terms of assembly, part of the 30S ribosomal subunit. Forms a loose heterodimer with protein S19. Forms two bridges to the 50S subunit in the 70S ribosome.

Its function is as follows. Located at the top of the head of the 30S subunit, it contacts several helices of the 16S rRNA. In the 70S ribosome it contacts the 23S rRNA (bridge B1a) and protein L5 of the 50S subunit (bridge B1b), connecting the 2 subunits; these bridges are implicated in subunit movement. Contacts the tRNAs in the A and P-sites. In Ruegeria sp. (strain TM1040) (Silicibacter sp.), this protein is Small ribosomal subunit protein uS13.